The chain runs to 258 residues: 4-hydroxy-tetrahydrodipicolinate reductase (258 aa).

NAD(+) contacts are provided by residues 9–14, 91–93, and 115–118; these read GASGRM, GTT, and SPNM. H148 serves as the catalytic Proton donor/acceptor. H149 is a (S)-2,3,4,5-tetrahydrodipicolinate binding site. K152 serves as the catalytic Proton donor. Position 158–159 (158–159) interacts with (S)-2,3,4,5-tetrahydrodipicolinate; the sequence is GT.

This sequence belongs to the DapB family.

It is found in the cytoplasm. It catalyses the reaction (S)-2,3,4,5-tetrahydrodipicolinate + NAD(+) + H2O = (2S,4S)-4-hydroxy-2,3,4,5-tetrahydrodipicolinate + NADH + H(+). The catalysed reaction is (S)-2,3,4,5-tetrahydrodipicolinate + NADP(+) + H2O = (2S,4S)-4-hydroxy-2,3,4,5-tetrahydrodipicolinate + NADPH + H(+). It functions in the pathway amino-acid biosynthesis; L-lysine biosynthesis via DAP pathway; (S)-tetrahydrodipicolinate from L-aspartate: step 4/4. Its function is as follows. Catalyzes the conversion of 4-hydroxy-tetrahydrodipicolinate (HTPA) to tetrahydrodipicolinate. The polypeptide is 4-hydroxy-tetrahydrodipicolinate reductase (Lawsonia intracellularis (strain PHE/MN1-00)).